Reading from the N-terminus, the 802-residue chain is Fibroblast growth factor receptor 3 (802 aa).

The 89-residue stretch at 27-115 (PDYLMVEQPP…ILRNFTIRVT (89 aa)) folds into the Ig-like C2-type 1 domain. Cysteine 52 and cysteine 98 are oxidised to a cystine. Asparagine 74, asparagine 87, and asparagine 109 each carry an N-linked (GlcNAc...) asparagine glycan. Positions 116–148 (DLPSSGDDEDDDDDDDDETEDREPPRWTQPERM) are disordered. Over residues 121–136 (GDDEDDDDDDDDETED) the composition is skewed to acidic residues. The segment covering 137–148 (REPPRWTQPERM) has biased composition (basic and acidic residues). Ig-like C2-type domains follow at residues 140 to 233 (PRWT…YQLD) and 242 to 342 (PILQ…FWLH). Residues cysteine 165 and cysteine 217 are joined by a disulfide bond. Asparagine 214, asparagine 251, asparagine 283, asparagine 303, and asparagine 315 each carry an N-linked (GlcNAc...) asparagine glycan. Cysteines 264 and 326 form a disulfide. Residues 363-383 (ITVLIVVTSTIVFILLVIIVI) traverse the membrane as a helical segment. Topologically, residues 384–802 (THLMKVPSKK…HQQHNGAIPT (419 aa)) are cytoplasmic. The Protein kinase domain maps to 462–751 (LTLGKPLGEG…LTVTSTNEYL (290 aa)). Residues 468-476 (LGEGCFGQV) and lysine 498 each bind ATP. Residue aspartate 607 is the Proton acceptor of the active site. Phosphotyrosine; by autocatalysis occurs at positions 637, 638, 714, and 750.

It belongs to the protein kinase superfamily. Tyr protein kinase family. Fibroblast growth factor receptor subfamily. In terms of assembly, monomer. Homodimer after ligand binding. In terms of processing, autophosphorylated. Binding of FGF family members together with heparan sulfate proteoglycan or heparin promotes receptor dimerization and autophosphorylation on tyrosine residues. Autophosphorylation occurs in trans between the two FGFR molecules present in the dimer.

It localises to the cell membrane. The catalysed reaction is L-tyrosyl-[protein] + ATP = O-phospho-L-tyrosyl-[protein] + ADP + H(+). With respect to regulation, present in an inactive conformation in the absence of bound ligand. Ligand binding leads to dimerization and activation by autophosphorylation on tyrosine residues. Tyrosine-protein kinase that acts as a cell-surface receptor for fibroblast growth factors and plays an essential role in the regulation of cell proliferation, differentiation and apoptosis. Plays an essential role in the regulation of chondrocyte differentiation, proliferation and apoptosis, and is required for normal skeleton development. Regulates both osteogenesis and postnatal bone mineralization by osteoblasts. Promotes apoptosis in chondrocytes, but can also promote cancer cell proliferation. Phosphorylates PLCG1, CBL and FRS2. Ligand binding leads to the activation of several signaling cascades. Activation of PLCG1 leads to the production of the cellular signaling molecules diacylglycerol and inositol 1,4,5-trisphosphate. Phosphorylation of FRS2 triggers recruitment of GRB2, GAB1, PIK3R1 and SOS1, and mediates activation of RAS, MAPK1/ERK2, MAPK3/ERK1 and the MAP kinase signaling pathway, as well as of the AKT1 signaling pathway. The chain is Fibroblast growth factor receptor 3 (fgfr3) from Xenopus laevis (African clawed frog).